Here is a 270-residue protein sequence, read N- to C-terminus: Putative serine acetyltransferase (270 aa).

This sequence belongs to the transferase hexapeptide repeat family.

The protein resides in the cytoplasm. It is found in the nucleus. It carries out the reaction L-serine + acetyl-CoA = O-acetyl-L-serine + CoA. It functions in the pathway amino-acid biosynthesis; L-cysteine biosynthesis; L-cysteine from L-serine: step 1/2. This is Putative serine acetyltransferase from Schizosaccharomyces pombe (strain 972 / ATCC 24843) (Fission yeast).